Here is a 374-residue protein sequence, read N- to C-terminus: Methylthioribose-1-phosphate isomerase (374 aa).

Ser2 bears the N-acetylserine mark. Asp253 functions as the Proton donor in the catalytic mechanism.

This sequence belongs to the eIF-2B alpha/beta/delta subunits family. MtnA subfamily.

It is found in the cytoplasm. It localises to the nucleus. The catalysed reaction is 5-(methylsulfanyl)-alpha-D-ribose 1-phosphate = 5-(methylsulfanyl)-D-ribulose 1-phosphate. The protein operates within amino-acid biosynthesis; L-methionine biosynthesis via salvage pathway; L-methionine from S-methyl-5-thio-alpha-D-ribose 1-phosphate: step 1/6. In terms of biological role, catalyzes the interconversion of methylthioribose-1-phosphate (MTR-1-P) into methylthioribulose-1-phosphate (MTRu-1-P). In Arabidopsis thaliana (Mouse-ear cress), this protein is Methylthioribose-1-phosphate isomerase.